A 270-amino-acid chain; its full sequence is Glutamate racemase (270 aa).

Substrate contacts are provided by residues aspartate 14–serine 15 and tyrosine 46–glycine 47. The active-site Proton donor/acceptor is the cysteine 77. Asparagine 78 to threonine 79 serves as a coordination point for substrate. The active-site Proton donor/acceptor is the cysteine 189. Threonine 190 to histidine 191 is a binding site for substrate.

It belongs to the aspartate/glutamate racemases family.

The catalysed reaction is L-glutamate = D-glutamate. It functions in the pathway cell wall biogenesis; peptidoglycan biosynthesis. In terms of biological role, provides the (R)-glutamate required for cell wall biosynthesis. The protein is Glutamate racemase of Neisseria meningitidis serogroup C.